A 150-amino-acid polypeptide reads, in one-letter code: D-aminoacyl-tRNA deacylase (150 aa).

A Gly-cisPro motif, important for rejection of L-amino acids motif is present at residues 136–137 (GP).

The protein belongs to the DTD family. As to quaternary structure, homodimer.

Its subcellular location is the cytoplasm. It catalyses the reaction glycyl-tRNA(Ala) + H2O = tRNA(Ala) + glycine + H(+). The catalysed reaction is a D-aminoacyl-tRNA + H2O = a tRNA + a D-alpha-amino acid + H(+). In terms of biological role, an aminoacyl-tRNA editing enzyme that deacylates mischarged D-aminoacyl-tRNAs. Also deacylates mischarged glycyl-tRNA(Ala), protecting cells against glycine mischarging by AlaRS. Acts via tRNA-based rather than protein-based catalysis; rejects L-amino acids rather than detecting D-amino acids in the active site. By recycling D-aminoacyl-tRNA to D-amino acids and free tRNA molecules, this enzyme counteracts the toxicity associated with the formation of D-aminoacyl-tRNA entities in vivo and helps enforce protein L-homochirality. This is D-aminoacyl-tRNA deacylase from Staphylococcus aureus (strain Mu50 / ATCC 700699).